The following is a 796-amino-acid chain: MAWDMCSQDSVWSDIECAALVGEDQPLCPDLPELDLSELDVNDLDTDSFLGGLKWCSDQSEIISNQYNNEPANIFEKIDEENEANLLAVLTETLDSLPVDEDGLPSFDALTDGDVTTDNEASPSSMPDGTPPPQEAEEPSLLKKLLLAPANTQLSYNECSGLSTQNHANHTHRIRTNPAIVKTENSWSNKAKSICQQQKPQRRPCSELLKYLTTNDDPPHTKPTENRNSSRDKCASKKKSHTQPQSQHAQAKPTTLSLPLTPESPNDPKGSPFENKTIERTLSVELSGTAGLTPPTTPPHKANQDNPFKASPKLKPSCKTVVPPPTKRARYSECSGTQGSHSTKKGPEQSELYAQLSKSSVLSRGHEERKTKRPSLRLFGDHDYCQSVNSKTDILINISQELQDSRQLDFKDASCDWQGHICSSTDSSQCYLRETLEASKQVSPCSTRKQLQDQEIRAELNKHFGHPSQAVFDDKVDKTSELRDGNFSNEQFSKLPVFINSGLAMDGLFDDSEDENDKLSYPWDGTQSYSLFDVSPSCSSFNSPCRDSVSPPKSLFSQRPQRMRSRSRSFSRHRSCSRSPYSRSRSRSPGSRSSSRSCYYYESSHYRHRTHRNSPLYVRSRSRSPYSRRPRYDSYEANEHERLKRDEYRREYEKRESERAKQRERQKQKAIEERRVIYVGKIRPDTTRTELRDRFEVFGEIEECTVNLRDDGDSYGFITYRYTCDAFAALENGYTLRRSNETDFELYFCGRKQFFKSNYADLDSNSDDFDPASTKSKYDSLDFDSLLKEAQRSLRR.

An N6-acetyllysine modification is found at Lys-77. Residues 98 to 138 are disordered; it reads PVDEDGLPSFDALTDGDVTTDNEASPSSMPDGTPPPQEAEE. Residues 114-127 show a composition bias toward polar residues; the sequence is DVTTDNEASPSSMP. The short motif at 142–146 is the LXXLL motif element; it reads LKKLL. At Lys-144 the chain carries N6-acetyllysine. Thr-176 is subject to Phosphothreonine; by AMPK. An N6-acetyllysine modification is found at Lys-182. Residues 211 to 275 are disordered; that stretch reads YLTTNDDPPH…NDPKGSPFEN (65 aa). The span at 217–235 shows a compositional bias: basic and acidic residues; the sequence is DPPHTKPTENRNSSRDKCA. Residues 242 to 258 show a composition bias toward polar residues; it reads TQPQSQHAQAKPTTLSL. Residues Lys-252, Lys-269, Lys-276, Lys-319, Lys-345, Lys-411, Lys-440, and Lys-449 each carry the N6-acetyllysine modification. Residues 288-350 form a disordered region; it reads GTAGLTPPTT…HSTKKGPEQS (63 aa). An interaction with PPARG region spans residues 291-337; sequence GLTPPTTPPHKANQDNPFKASPKLKPSCKTVVPPPTKRARYSECSGT. The interval 348–796 is mediates interaction with RNF34; sequence EQSELYAQLS…LKEAQRSLRR (449 aa). Ser-537 is modified (phosphoserine; by AMPK). 2 disordered regions span residues 541 to 597 and 611 to 669; these read FNSP…SSRS and HRNS…QKQK. Residues 561–576 are compositionally biased toward basic residues; the sequence is QRMRSRSRSFSRHRSC. The segment covering 577–597 has biased composition (low complexity); the sequence is SRSPYSRSRSRSPGSRSSSRS. Residues 620 to 629 show a composition bias toward basic residues; that stretch reads SRSRSPYSRR. Positions 630 to 669 are enriched in basic and acidic residues; sequence PRYDSYEANEHERLKRDEYRREYEKRESERAKQRERQKQK. One can recognise an RRM domain in the interval 675–751; it reads RVIYVGKIRP…TDFELYFCGR (77 aa). 2 positions are modified to N6-acetyllysine: Lys-756 and Lys-777.

Homooligomer. Interacts with MYBBP1A; inhibits MYBBP1A transcriptional activation. Interacts with PRDM16, LPIN1 and PML. Interacts (via LXXLL motif) with RORA and RORC (via AF-2 motif); activates RORA and RORC transcriptional activation. Interacts with LRPPRC. Interacts with FOXO1. Interacts with NR5A2. Phosphorylation by AMPK in skeletal muscle increases activation of its own promoter. Phosphorylated by CLK2. Post-translationally, heavily acetylated by KAT2A/GCN5 under conditions of high nutrients, leading to inactivation of PPARGC1A. Deacetylated by SIRT1 in low nutrients/high NAD conditions, leading to its activation. In terms of processing, ubiquitinated. Ubiquitination by RNF34 induces proteasomal degradation.

Its subcellular location is the nucleus. The protein resides in the PML body. In terms of biological role, transcriptional coactivator for steroid receptors and nuclear receptors. Greatly increases the transcriptional activity of PPARG and thyroid hormone receptor on the uncoupling protein promoter. Can regulate key mitochondrial genes that contribute to the program of adaptive thermogenesis. Plays an essential role in metabolic reprogramming in response to dietary availability through coordination of the expression of a wide array of genes involved in glucose and fatty acid metabolism. Acts as a key regulator of gluconeogenesis: stimulates hepatic gluconeogenesis by increasing the expression of gluconeogenic enzymes, and acting together with FOXO1 to promote the fasting gluconeogenic program. Induces the expression of PERM1 in the skeletal muscle in an ESRRA-dependent manner. Also involved in the integration of the circadian rhythms and energy metabolism. Required for oscillatory expression of clock genes, such as BMAL1 and NR1D1, through the coactivation of RORA and RORC, and metabolic genes, such as PDK4 and PEPCK. The chain is Peroxisome proliferator-activated receptor gamma coactivator 1-alpha (Ppargc1a) from Rattus norvegicus (Rat).